Here is a 64-residue protein sequence, read N- to C-terminus: Small cysteine-rich protein (64 aa).

The N-terminal stretch at 1–17 is a signal peptide; it reads FVCVQARQIDPEQILRT. Positions 18-19 are excised as a propeptide; the sequence is PE.

In terms of processing, contains 4 disulfide bonds.

The protein resides in the secreted. The protein localises to the nematocyst. The protein is Small cysteine-rich protein of Anemonia viridis (Snakelocks anemone).